A 225-amino-acid chain; its full sequence is UPF0758 protein NMC1174 (225 aa).

In terms of domain architecture, MPN spans 102–224 (VLSDPDTVAD…VRSFRQLGLM (123 aa)). H173, H175, and D186 together coordinate Zn(2+). Residues 173–186 (HNHPGGSPEPSQED) carry the JAMM motif motif.

The protein belongs to the UPF0758 family.

The polypeptide is UPF0758 protein NMC1174 (Neisseria meningitidis serogroup C / serotype 2a (strain ATCC 700532 / DSM 15464 / FAM18)).